Consider the following 338-residue polypeptide: MLSALARPAGAALRRSFSTSAQNNAKVAVLGASGGIGQPLSLLLKNSPLVSRLTLYDIAHTPGVAADLSHIETRAAVKGYLGPEQLPDCLKGCDVVVIPAGVPRKPGMTRDDLFNTNASIVATLTAACAQHCPEAMICIISNPVNSTIPITAEVFKKHGVYNPNKIFGVTTLDIVRANTFIAELKGLDPARVNVPVIGGHAGKTIIPLISQCTPKVDLPQDQLTAVTGRIQEAGTEVVKAKAGAGSATLSMAYAGARFVFSLVDAINGKEGVVECSFVKSQETDCPYFSTPLLLGKKGIEKNLGIGKISPFEEKMIAEALPELKASIKKGEEFVKNMK.

A mitochondrion-targeting transit peptide spans 1–24; the sequence is MLSALARPAGAALRRSFSTSAQNN. NAD(+) contacts are provided by residues 31–37 and aspartate 57; that span reads GASGGIG. The O-linked (GalNAc...) serine glycan is linked to serine 33. N6-acetyllysine; alternate occurs at positions 78 and 91. N6-succinyllysine; alternate occurs at positions 78 and 91. Substrate contacts are provided by arginine 104 and arginine 110. NAD(+) is bound by residues asparagine 117 and 140–142; that span reads ISN. Asparagine 142 is a substrate binding site. An N6-acetyllysine modification is found at lysine 165. The active-site Proton relay is the aspartate 173. Residue arginine 176 coordinates substrate. Lysine 185 is subject to N6-acetyllysine; alternate. Residue lysine 185 is modified to N6-succinyllysine; alternate. Histidine 200 acts as the Proton acceptor in catalysis. At lysine 203 the chain carries N6-succinyllysine. N6-acetyllysine; alternate is present on residues lysine 215 and lysine 239. Residues lysine 215 and lysine 239 each carry the N6-succinyllysine; alternate modification. Lysine 239 carries the N6-malonyllysine; alternate modification. Serine 246 is subject to Phosphoserine. Methionine 251 lines the NAD(+) pocket. The residue at position 269 (lysine 269) is an N6-succinyllysine. N6-acetyllysine; alternate occurs at positions 296, 301, 307, 314, and 324. N6-succinyllysine; alternate occurs at positions 296, 301, 307, 314, and 324. Lysine 307 carries the N6-malonyllysine; alternate modification. A Phosphoserine modification is found at serine 326. N6-acetyllysine; alternate is present on residues lysine 328, lysine 329, and lysine 335. Lysine 328 is modified (N6-succinyllysine; alternate). N6-malonyllysine; alternate is present on lysine 329. Residue lysine 335 is modified to N6-succinyllysine; alternate.

It belongs to the LDH/MDH superfamily. MDH type 1 family. In terms of assembly, homodimer. In terms of processing, acetylation is enhanced after treatment either with trichostin A (TSA) or with nicotinamide (NAM) with the appearance of tri- and tetraacetylations. Glucose also increases acetylation. In terms of tissue distribution, ubiquitously expressed. Highly expressed in skeletal muscle and heart. Also expressed in liver, ileum, colon, kidney and adipose tissue, and at very low levels in lung, pancreas, stomach and spleen.

The protein localises to the mitochondrion matrix. It carries out the reaction (S)-malate + NAD(+) = oxaloacetate + NADH + H(+). Enzyme activity is enhanced by acetylation. The polypeptide is Malate dehydrogenase, mitochondrial (Felis catus (Cat)).